Consider the following 78-residue polypeptide: RNA-binding protein Hfq (78 aa).

The Sm domain maps to Asp-10–Val-69.

It belongs to the Hfq family. As to quaternary structure, homohexamer.

Its function is as follows. RNA chaperone that binds small regulatory RNA (sRNAs) and mRNAs to facilitate mRNA translational regulation in response to envelope stress, environmental stress and changes in metabolite concentrations. Also binds with high specificity to tRNAs. This is RNA-binding protein Hfq from Paraburkholderia phytofirmans (strain DSM 17436 / LMG 22146 / PsJN) (Burkholderia phytofirmans).